A 76-amino-acid chain; its full sequence is MQLVLAAKYIGAAIATIGLLGAGIGIAIVFAALINGTSRNPSLRNTLFPFAILGFALSEATGLFCLMISFLLLYGV.

The next 2 membrane-spanning stretches (helical) occupy residues 14–34 (IATIGLLGAGIGIAIVFAALI) and 52–72 (ILGFALSEATGLFCLMISFLL).

Belongs to the ATPase C chain family. As to quaternary structure, F-type ATPases have 2 components, CF(1) - the catalytic core - and CF(0) - the membrane proton channel. CF(1) has five subunits: alpha(3), beta(3), gamma(1), delta(1), epsilon(1). CF(0) has three main subunits: a, b and c.

The protein resides in the mitochondrion membrane. Its function is as follows. Mitochondrial membrane ATP synthase (F(1)F(0) ATP synthase or Complex V) produces ATP from ADP in the presence of a proton gradient across the membrane which is generated by electron transport complexes of the respiratory chain. F-type ATPases consist of two structural domains, F(1) - containing the extramembraneous catalytic core and F(0) - containing the membrane proton channel, linked together by a central stalk and a peripheral stalk. During catalysis, ATP synthesis in the catalytic domain of F(1) is coupled via a rotary mechanism of the central stalk subunits to proton translocation. Part of the complex F(0) domain. A homomeric c-ring of probably 10 subunits is part of the complex rotary element. The chain is ATP synthase subunit 9, mitochondrial (ATP9) from Wickerhamomyces canadensis (Yeast).